A 130-amino-acid chain; its full sequence is Protein LLP homolog (130 aa).

The span at 1–21 (MAKSLRSKWKRKMRAEKRKKN) shows a compositional bias: basic residues. Disordered regions lie at residues 1–23 (MAKSLRSKWKRKMRAEKRKKNAP) and 57–76 (QEKMQCEEGRCDGADEEKDD). A coiled-coil region spans residues 10–78 (KRKMRAEKRK…GADEEKDDMK (69 aa)). Lys78 participates in a covalent cross-link: Glycyl lysine isopeptide (Lys-Gly) (interchain with G-Cter in SUMO2). Positions 104-124 (RQRKRLKAKREKKRGKSRAKA) are enriched in basic residues. Positions 104–130 (RQRKRLKAKREKKRGKSRAKAAKGLAW) are disordered.

This sequence belongs to the learning-associated protein family. As to quaternary structure, interacts with CTCF, MYO1C and with the transcriptional machinery, including RNA polymerase II and TBP. Widely expressed, with high levels in testis and spleen and low levels in heart. In the brain, expressed in the cortex and hippocampus, and at very low levels in the cerebellum.

Its subcellular location is the nucleus. The protein localises to the nucleolus. It is found in the chromosome. Its function is as follows. In hippocampal neurons, regulates dendritic and spine growth and synaptic transmission. The sequence is that of Protein LLP homolog (Llph) from Mus musculus (Mouse).